The following is a 30-amino-acid chain: uncharacterized protein (30 aa).

The interval 1-30 is disordered; sequence MHLSTLPNVPWPNRSFTTKRPPLPNMSFSW.

This is an uncharacterized protein from Saccharomyces cerevisiae (strain ATCC 204508 / S288c) (Baker's yeast).